A 122-amino-acid chain; its full sequence is Large ribosomal subunit protein eL31 (122 aa).

Belongs to the eukaryotic ribosomal protein eL31 family.

The polypeptide is Large ribosomal subunit protein eL31 (Caenorhabditis elegans).